A 542-amino-acid chain; its full sequence is Importin subunit alpha-1 (542 aa).

The segment at 1–29 (MSASSRFIPEHRRQNYKGKGTFQADELRR) is disordered. Residues 1–60 (MSASSRFIPEHRRQNYKGKGTFQADELRRRRETQQIEIRKQKREENLNKRRNLVDVQEPA) enclose the IBB domain. ARM repeat units lie at residues 114-155 (IQKV…SSNQ), 156-197 (THVV…SPMC), 198-240 (RDHV…KNPQ), 241-282 (PDWN…ANEK), 283-324 (IQAI…DDVQ), 325-366 (TQVI…NSSQ), 367-408 (IQYV…GARR), and 409-453 (PDQI…GELD).

Belongs to the importin alpha family. Interacts with pap1.

It localises to the nucleus. Its function is as follows. Binds specifically and directly to substrates containing either a simple or bipartite NLS motif. Promotes docking of import substrates to the nuclear envelope. Seems to act as a cytosolic receptor for both simple and bipartite NLS motifs. Has an essential role in mitotic chromosome condensation. Involved in nuclear protein import. Required for efficient nuclear import of both an SV40 nuclear localization signal-containing reporter protein and the pap1 component of the stress response MAP kinase pathway. Required for proper mitotic progression. This Schizosaccharomyces pombe (strain 972 / ATCC 24843) (Fission yeast) protein is Importin subunit alpha-1 (cut15).